The following is a 158-amino-acid chain: Transcription elongation factor GreA (158 aa).

Residues 47-68 (AEYDAAKEAQGLLELKIKKMEE) are a coiled coil.

It belongs to the GreA/GreB family.

In terms of biological role, necessary for efficient RNA polymerase transcription elongation past template-encoded arresting sites. The arresting sites in DNA have the property of trapping a certain fraction of elongating RNA polymerases that pass through, resulting in locked ternary complexes. Cleavage of the nascent transcript by cleavage factors such as GreA or GreB allows the resumption of elongation from the new 3'terminus. GreA releases sequences of 2 to 3 nucleotides. The polypeptide is Transcription elongation factor GreA (Flavobacterium psychrophilum (strain ATCC 49511 / DSM 21280 / CIP 103535 / JIP02/86)).